Reading from the N-terminus, the 249-residue chain is tRNA pseudouridine synthase A (249 aa).

Catalysis depends on Asp-54, which acts as the Nucleophile. Tyr-112 contributes to the substrate binding site.

The protein belongs to the tRNA pseudouridine synthase TruA family. In terms of assembly, homodimer.

It carries out the reaction uridine(38/39/40) in tRNA = pseudouridine(38/39/40) in tRNA. Formation of pseudouridine at positions 38, 39 and 40 in the anticodon stem and loop of transfer RNAs. In Latilactobacillus sakei subsp. sakei (strain 23K) (Lactobacillus sakei subsp. sakei), this protein is tRNA pseudouridine synthase A.